The primary structure comprises 167 residues: Telethonin (167 aa).

At Ser-39 the chain carries Phosphoserine. The tract at residues 144-167 (VPVSKPGALRRSLSRSMSQEAQRG) is disordered. Residues 157 to 167 (SRSMSQEAQRG) show a composition bias toward polar residues.

Interacts with MYOZ1, MYOZ2 and MYOZ3. Interacts with CSRP3. Interacts directly with the N-terminal Ig-like domains of 2 titin (TTN) molecules. Interacts with ANKRD2; the interaction is direct. In terms of tissue distribution, heart and skeletal muscle.

It localises to the cytoplasm. The protein localises to the myofibril. Its subcellular location is the sarcomere. Muscle assembly regulating factor. Mediates the antiparallel assembly of titin (TTN) molecules at the sarcomeric Z-disk. This chain is Telethonin (TCAP), found in Homo sapiens (Human).